We begin with the raw amino-acid sequence, 182 residues long: ATP-dependent protease subunit HslV (182 aa).

Threonine 7 is an active-site residue. Residues alanine 166, cysteine 169, and threonine 172 each contribute to the Na(+) site.

The protein belongs to the peptidase T1B family. HslV subfamily. A double ring-shaped homohexamer of HslV is capped on each side by a ring-shaped HslU homohexamer. The assembly of the HslU/HslV complex is dependent on binding of ATP.

The protein localises to the cytoplasm. It catalyses the reaction ATP-dependent cleavage of peptide bonds with broad specificity.. Allosterically activated by HslU binding. Its function is as follows. Protease subunit of a proteasome-like degradation complex believed to be a general protein degrading machinery. The protein is ATP-dependent protease subunit HslV of Albidiferax ferrireducens (strain ATCC BAA-621 / DSM 15236 / T118) (Rhodoferax ferrireducens).